A 640-amino-acid chain; its full sequence is Threonine--tRNA ligase (640 aa).

In terms of domain architecture, TGS spans 1 to 61 (MPVVTLPDGS…DKDSHLAIIT (61 aa)). The segment at 242-533 (DHRRLGKQLD…LIENHAGNMP (292 aa)) is catalytic. Residues C333, H384, and H510 each coordinate Zn(2+).

The protein belongs to the class-II aminoacyl-tRNA synthetase family. Homodimer. It depends on Zn(2+) as a cofactor.

The protein localises to the cytoplasm. The catalysed reaction is tRNA(Thr) + L-threonine + ATP = L-threonyl-tRNA(Thr) + AMP + diphosphate + H(+). Functionally, catalyzes the attachment of threonine to tRNA(Thr) in a two-step reaction: L-threonine is first activated by ATP to form Thr-AMP and then transferred to the acceptor end of tRNA(Thr). Also edits incorrectly charged L-seryl-tRNA(Thr). The polypeptide is Threonine--tRNA ligase (Polynucleobacter asymbioticus (strain DSM 18221 / CIP 109841 / QLW-P1DMWA-1) (Polynucleobacter necessarius subsp. asymbioticus)).